A 61-amino-acid chain; its full sequence is Probable tautomerase spyM18_1099 (61 aa).

Pro-2 serves as the catalytic Proton acceptor; via imino nitrogen.

Belongs to the 4-oxalocrotonate tautomerase family.

The sequence is that of Probable tautomerase spyM18_1099 from Streptococcus pyogenes serotype M18 (strain MGAS8232).